The chain runs to 110 residues: Large ribosomal subunit protein uL22 (110 aa).

Belongs to the universal ribosomal protein uL22 family. In terms of assembly, part of the 50S ribosomal subunit.

In terms of biological role, this protein binds specifically to 23S rRNA; its binding is stimulated by other ribosomal proteins, e.g. L4, L17, and L20. It is important during the early stages of 50S assembly. It makes multiple contacts with different domains of the 23S rRNA in the assembled 50S subunit and ribosome. The globular domain of the protein is located near the polypeptide exit tunnel on the outside of the subunit, while an extended beta-hairpin is found that lines the wall of the exit tunnel in the center of the 70S ribosome. The chain is Large ribosomal subunit protein uL22 from Shewanella frigidimarina (strain NCIMB 400).